A 360-amino-acid chain; its full sequence is AA9 family lytic polysaccharide monooxygenase A (360 aa).

The N-terminal stretch at 1–19 is a signal peptide; the sequence is MKTSFGLLALAAAAKLVNA. Positions 20 and 102 each coordinate Cu(2+). A disulfide bridge links cysteine 62 with cysteine 183. Histidine 169 provides a ligand contact to O2. Cu(2+) is bound at residue tyrosine 180. The segment at 254-293 is disordered; it reads TSAASASSTKAPATTAAPVQTESAKPATSTTQAAAPTTLV. The CBM1 domain occupies 322–358; the sequence is GVVKMYAQCGGMNYSGSTTCESGLTCKQWNPYYHQCV. N-linked (GlcNAc...) asparagine glycosylation is present at asparagine 334.

This sequence belongs to the polysaccharide monooxygenase AA9 family. Cu(2+) is required as a cofactor.

It is found in the secreted. The enzyme catalyses [(1-&gt;4)-beta-D-glucosyl]n+m + reduced acceptor + O2 = 4-dehydro-beta-D-glucosyl-[(1-&gt;4)-beta-D-glucosyl]n-1 + [(1-&gt;4)-beta-D-glucosyl]m + acceptor + H2O.. In terms of biological role, lytic polysaccharide monooxygenase (LPMO) that depolymerizes crystalline and amorphous polysaccharides via the oxidation of scissile alpha- or beta-(1-4)-glycosidic bonds, yielding C4 oxidation products. Catalysis by LPMOs requires the reduction of the active-site copper from Cu(II) to Cu(I) by a reducing agent and H(2)O(2) or O(2) as a cosubstrate. The polypeptide is AA9 family lytic polysaccharide monooxygenase A (eglD) (Aspergillus terreus (strain NIH 2624 / FGSC A1156)).